Here is a 173-residue protein sequence, read N- to C-terminus: Large ribosomal subunit protein uL10 (173 aa).

The protein belongs to the universal ribosomal protein uL10 family. As to quaternary structure, part of the ribosomal stalk of the 50S ribosomal subunit. The N-terminus interacts with L11 and the large rRNA to form the base of the stalk. The C-terminus forms an elongated spine to which L12 dimers bind in a sequential fashion forming a multimeric L10(L12)X complex.

Functionally, forms part of the ribosomal stalk, playing a central role in the interaction of the ribosome with GTP-bound translation factors. The protein is Large ribosomal subunit protein uL10 of Chloroherpeton thalassium (strain ATCC 35110 / GB-78).